Consider the following 336-residue polypeptide: F420-dependent glucose-6-phosphate dehydrogenase (336 aa).

D40 serves as a coordination point for coenzyme F420-(gamma-Glu)n. The active-site Proton donor is the H41. Residues T77 and 108–109 (TG) contribute to the coenzyme F420-(gamma-Glu)n site. Catalysis depends on E110, which acts as the Proton acceptor. Residues N113, 176–177 (SG), and 179–180 (AA) each bind coenzyme F420-(gamma-Glu)n. Substrate contacts are provided by T194, K197, K258, and R282.

It belongs to the F420-dependent glucose-6-phosphate dehydrogenase family. In terms of assembly, homodimer.

The catalysed reaction is oxidized coenzyme F420-(gamma-L-Glu)(n) + D-glucose 6-phosphate + H(+) = 6-phospho-D-glucono-1,5-lactone + reduced coenzyme F420-(gamma-L-Glu)(n). In terms of biological role, catalyzes the coenzyme F420-dependent oxidation of glucose 6-phosphate (G6P) to 6-phosphogluconolactone. The protein is F420-dependent glucose-6-phosphate dehydrogenase of Microbacterium testaceum (strain StLB037).